We begin with the raw amino-acid sequence, 225 residues long: MNSMEFPLFDRTTPNSVISTTLNDLSNWSRLSSLWPLLYGTSCCFIEFASLIGSRFDFDRYGLVPRSSPRQADLILTAGTVTMKMAPSLVRLYEQMPEPKYVIAMGACTITGGMFSTDSYSTVRGVDKLIPVDVYLPGCPPKPEAIIDAITKLRKKVSREIYEDRTGSQQENRCFTTNHKFHLGRSTRAVNYDQGLLYQSTSTSEIPSEAFFKYKSSVSSHELVN.

Cys43, Cys44, Cys108, and Cys139 together coordinate [4Fe-4S] cluster.

It belongs to the complex I 20 kDa subunit family. NDH is composed of at least 16 different subunits, 5 of which are encoded in the nucleus. The cofactor is [4Fe-4S] cluster.

Its subcellular location is the plastid. The protein resides in the chloroplast thylakoid membrane. It carries out the reaction a plastoquinone + NADH + (n+1) H(+)(in) = a plastoquinol + NAD(+) + n H(+)(out). The catalysed reaction is a plastoquinone + NADPH + (n+1) H(+)(in) = a plastoquinol + NADP(+) + n H(+)(out). In terms of biological role, NDH shuttles electrons from NAD(P)H:plastoquinone, via FMN and iron-sulfur (Fe-S) centers, to quinones in the photosynthetic chain and possibly in a chloroplast respiratory chain. The immediate electron acceptor for the enzyme in this species is believed to be plastoquinone. Couples the redox reaction to proton translocation, and thus conserves the redox energy in a proton gradient. This is NAD(P)H-quinone oxidoreductase subunit K, chloroplastic from Nymphaea alba (White water-lily).